The chain runs to 338 residues: Replication factor C subunit 3 (338 aa).

57–64 (GPPGTGKT) serves as a coordination point for ATP.

This sequence belongs to the activator 1 small subunits family. As to quaternary structure, heteropentamer of subunits RFC1, RFC2, RFC3, RFC4 and RFC5 that forms a complex with PCNA in the presence of ATP.

The protein localises to the nucleus. The elongation of primed DNA templates by DNA polymerase delta and epsilon requires the action of the accessory proteins proliferating cell nuclear antigen (PCNA) and activator 1. Subunit 3 binds ATP. The chain is Replication factor C subunit 3 (RFC3) from Blastobotrys adeninivorans (Yeast).